A 509-amino-acid polypeptide reads, in one-letter code: Cytochrome P450 monooxygenase alt3 (509 aa).

A helical membrane pass occupies residues 25–45 (IITGIIVLPVLYVLLKVIYNL). Position 450 (Cys-450) interacts with heme.

This sequence belongs to the cytochrome P450 family. It depends on heme as a cofactor.

The protein resides in the membrane. It participates in secondary metabolite biosynthesis. Its function is as follows. Cytochrome P450 monooxygenase; part of the gene cluster that mediates the biosynthesis of alternapyrone derivatives. Alternapyrone is a decaketide with octa-methylation from methionine on every C2 unit except the third unit. All the domains in the polyketide synthase alt5 are apparently involved in alternapyrone synthesis, that is, the 8 CMeT, 7 KR, 7 DH, and 4 ER reactions in the 9 KS-mediated condensation steps required for alternapyrone synthesis. the alternapyrone produced by alt5 might be intensively modified by cytochrome P450 monooxygenases alt1, alt2 and alt3 and FAD-dependent oxidoreductase alt4 present in the alt gene cluster. The sequence is that of Cytochrome P450 monooxygenase alt3 from Alternaria solani.